Here is a 917-residue protein sequence, read N- to C-terminus: MMETPTDNIVSPFHNFGSSTQYSGTLSRTPNQIIELEKPSTLSPLSRGKKWTEKLARFQRSSAKKKRFSPSPISSSTFSFSPKSRVTSSNSSGNEDGNLMNTPSTVSTDYLPQHPHRTSSLPRPNSNLFHASNSNLSRANEPPRAENLSDNIPPKVAPFGYPIQRTSIKKSFLNASCTLCDEPISNRRKGEKIIELACGHLSHQECLIISFGTTSKADVRALFPFCTKCKKDTNKAVQCIPENDELKDILISDFLIHKIPDSELSITPQSRFPPYSPLLPPFGLSYTPVERQTIYSQAPSLNPNLILAAPPKERNQIPQKKSNYTFLHSPLGHRRIPSGANSILADTSVALSANDSISAVSNSVRAKDDETKTTLPLLRSYFIQILLNNFQEELQDWRIDGDYGLLRLVDKLMISKDGQRYIQCWCFLFEDAFVIAEVDNDVDVLEIRLKNLEVFTPIANLRMTTLEASVLKCTLNKQHCADLSDLYIVQNINSDESTTVQKWISGILNQDFVFNEDNITSTLPILPIIKNFSKDVGNGRHETSTFLGLINPNKVVEVGNVHDNDTVIIRRGFTLNSGECSRQSTVDSIQSVLTTISSILSLKREKPDNLAIILQIDFTKLKEEDSLIVVYNSLKALTIKFARLQFCFVDRNNYVLDYGSVLHKIDSLDSISNLKSKSSSTQFSPIWLKNTLYPENIHEHLGIVAVSNSNMEAKKSILFQDYRCFTSFGRRRPNELKIKVGYLNVDYSDKIDELVEASSWTFVLETLCYSFGLSFDEHDDDDEEDNDDSTDNELDNSSGSLSDAESTTTIHIDSPFDNENATANMVNDRNLLTEGEHSNIENLETVASSVQPALIPNIRFSLHSEEEGTNENENENDMPVLLLSDMDKGIDGITRRSSFSSLIESGNNNCPLHMDYI.

Disordered regions lie at residues 1–25 (MMET…YSGT) and 58–151 (FQRS…LSDN). Residues 16 to 25 (FGSSTQYSGT) are compositionally biased toward polar residues. The span at 69–84 (SPSPISSSTFSFSPKS) shows a compositional bias: low complexity. Polar residues-rich tracts occupy residues 85-110 (RVTS…STDY) and 118-138 (TSSL…NLSR). S329 is subject to Phosphoserine. Positions 778–794 (HDDDDEEDNDDSTDNEL) are enriched in acidic residues. The tract at residues 778 to 821 (HDDDDEEDNDDSTDNELDNSSGSLSDAESTTTIHIDSPFDNENA) is disordered. The segment covering 799 to 821 (GSLSDAESTTTIHIDSPFDNENA) has biased composition (polar residues).

The protein to yeast FAR1. Post-translationally, may be regulated at the phosphorylation level, and by the mating type of the cell and depends on an intact pheromone-response pathway.

Its subcellular location is the cytoplasm. Component of the pheromone signal transduction pathway. It mediates pheromone signals acting between STE20 and STE11. It is absolutely required for pheromone-induced transcription of FUS1. May play a role in cell-cycle arrest in response to pheromone. This chain is Protein STE5 (STE5), found in Saccharomyces cerevisiae (strain ATCC 204508 / S288c) (Baker's yeast).